Here is a 219-residue protein sequence, read N- to C-terminus: ATP-dependent Clp protease proteolytic subunit 4 (219 aa).

The active-site Nucleophile is Ser125. His150 is an active-site residue.

Belongs to the peptidase S14 family. As to quaternary structure, fourteen ClpP subunits assemble into 2 heptameric rings which stack back to back to give a disk-like structure with a central cavity, resembling the structure of eukaryotic proteasomes.

The protein localises to the cytoplasm. It catalyses the reaction Hydrolysis of proteins to small peptides in the presence of ATP and magnesium. alpha-casein is the usual test substrate. In the absence of ATP, only oligopeptides shorter than five residues are hydrolyzed (such as succinyl-Leu-Tyr-|-NHMec, and Leu-Tyr-Leu-|-Tyr-Trp, in which cleavage of the -Tyr-|-Leu- and -Tyr-|-Trp bonds also occurs).. Its function is as follows. Cleaves peptides in various proteins in a process that requires ATP hydrolysis. Has a chymotrypsin-like activity. Plays a major role in the degradation of misfolded proteins. The chain is ATP-dependent Clp protease proteolytic subunit 4 from Prochlorococcus marinus (strain MIT 9312).